The following is a 232-amino-acid chain: Anti-sigma-K factor RskA (232 aa).

Over 1–90 (MTEHTDFELL…EVRRQSRWRT (90 aa)) the chain is Cytoplasmic. Residues 91–111 (AAFASAAAIAVGLGAFGLGVL) form a helical membrane-spanning segment. The Extracellular portion of the chain corresponds to 112–232 (TRPSPPPTVA…GTILAELPLG (121 aa)).

It belongs to the anti-sigma-K factor family.

The protein resides in the cell membrane. An anti-sigma factor for extracytoplasmic function (ECF) sigma factor SigK. ECF sigma factors are held in an inactive form by an anti-sigma factor until released by regulated intramembrane proteolysis (RIP). RIP occurs when an extracytoplasmic signal triggers a concerted proteolytic cascade to transmit information and elicit cellular responses. The membrane-spanning regulatory substrate protein is first cut extracytoplasmically (site-1 protease, S1P), then within the membrane itself (site-2 protease, S2P, Rip1), while cytoplasmic proteases finish degrading the regulatory protein, liberating the sigma factor. The polypeptide is Anti-sigma-K factor RskA (rskA) (Mycobacterium tuberculosis (strain ATCC 25177 / H37Ra)).